The primary structure comprises 692 residues: 5-taurinomethyluridine-[tRNA] synthase subunit MTO1, mitochondrial (692 aa).

A mitochondrion-targeting transit peptide spans 1 to 25 (MFYFRGCGRWVAASFTKLQFPLARL). FAD-binding positions include 43–48 (GGGHAG), valine 155, serine 218, and glutamine 407. The residue at position 508 (lysine 508) is an N6-methyllysine.

This sequence belongs to the MnmG family. As to quaternary structure, homodimer; forms a dimer in the presence of potassium. Interacts with GTPBP3; forms the GTPBP3-MTO1 complex composed of homodimers of GTPBP3 and MTO1. FAD serves as cofactor.

It is found in the mitochondrion. The catalysed reaction is 5,10-methylenetetrahydrofolate + uridine(34) in tRNA + taurine + GTP + A + H2O = 5-taurinomethyluridine(34) in tRNA + 7,8-dihydrofolate + GDP + AH2 + phosphate + H(+). Its function is as follows. Component of the GTPBP3-MTO1 complex that catalyzes the 5-taurinomethyluridine (taum(5)U) modification at the 34th wobble position (U34) of mitochondrial tRNAs (mt-tRNAs), which plays a role in mt-tRNA decoding and mitochondrial translation. Taum(5)U formation on mammalian mt-tRNA requires the presence of both GTPBP3-mediated GTPase activity and MTO1 catalytic activity. The protein is 5-taurinomethyluridine-[tRNA] synthase subunit MTO1, mitochondrial (MTO1) of Pongo abelii (Sumatran orangutan).